The primary structure comprises 424 residues: PtdIns3K complex I subunit atg38 (424 aa).

Positions 50–78 (LIKRCANNQIEELMVRIRELRESLPNKQT) form a coiled coil. Residues 73-212 (LPNKQTPISM…DPAYQNTNEQ (140 aa)) form a required for interaction with atg8 region. The AIM signature appears at 178 to 181 (FLIV). Residues 268–284 (LSEEEMGRSHKREESFK) show a composition bias toward basic and acidic residues. A disordered region spans residues 268–299 (LSEEEMGRSHKREESFKRAFGHASSSESSIGE). Positions 390-420 (TVDSQLKIKQLETQIATLQKQLEQFQTSTLD) form a coiled coil.

Belongs to the ATG38 family. In terms of assembly, component of the autophagy-specific vps34 PI3-kinase complex I composed of vps15, atg6, pik3/vps34, atg14 and atg38. Interacts (via AIM motif) with atg8; the interaction is direct and leads to recruitment of the autophagy-specific vps34 PI3-kinase complex I to the phagophore assembly site.

It localises to the preautophagosomal structure membrane. Its subcellular location is the cytoplasm. It is found in the cytosol. In terms of biological role, functions as a part of the autophagy-specific VPS34 PI3-kinase complex I that plays a role in autophagosome assembly. This complex is essential to recruit the atg8-phosphatidylinositol conjugate and the atg12-atg5 conjugate to the pre-autophagosomal structure. By binding to atg8 at the phagophore assembly site, atg38 helps establish a positive feedback loop for recruitment of phagophore assembly proteins, including atg8. The polypeptide is PtdIns3K complex I subunit atg38 (Schizosaccharomyces pombe (strain 972 / ATCC 24843) (Fission yeast)).